The chain runs to 407 residues: Putative replication protein A (407 aa).

Belongs to the ParA family.

The protein is Putative replication protein A of Sinorhizobium fredii (strain NBRC 101917 / NGR234).